Reading from the N-terminus, the 175-residue chain is 6,7-dimethyl-8-ribityllumazine synthase (175 aa).

5-amino-6-(D-ribitylamino)uracil-binding positions include Phe24, 58 to 60 (ALE), and 82 to 84 (AVI). 87–88 (ET) contacts (2S)-2-hydroxy-3-oxobutyl phosphate. His90 acts as the Proton donor in catalysis. Residue Asn115 coordinates 5-amino-6-(D-ribitylamino)uracil. A (2S)-2-hydroxy-3-oxobutyl phosphate-binding site is contributed by Arg129. The segment at 150–175 (ALEPEEDDEDEDDEDEDFDDEEDDGR) is disordered. Residues 152–175 (EPEEDDEDEDDEDEDFDDEEDDGR) are compositionally biased toward acidic residues.

The protein belongs to the DMRL synthase family.

The enzyme catalyses (2S)-2-hydroxy-3-oxobutyl phosphate + 5-amino-6-(D-ribitylamino)uracil = 6,7-dimethyl-8-(1-D-ribityl)lumazine + phosphate + 2 H2O + H(+). It participates in cofactor biosynthesis; riboflavin biosynthesis; riboflavin from 2-hydroxy-3-oxobutyl phosphate and 5-amino-6-(D-ribitylamino)uracil: step 1/2. Catalyzes the formation of 6,7-dimethyl-8-ribityllumazine by condensation of 5-amino-6-(D-ribitylamino)uracil with 3,4-dihydroxy-2-butanone 4-phosphate. This is the penultimate step in the biosynthesis of riboflavin. In Bordetella bronchiseptica (strain ATCC BAA-588 / NCTC 13252 / RB50) (Alcaligenes bronchisepticus), this protein is 6,7-dimethyl-8-ribityllumazine synthase.